The sequence spans 640 residues: ETV5-related protein Ets96B (640 aa).

The segment at 315 to 375 (HADSTTTAAQ…HHGHQQAEQQ (61 aa)) is disordered. A coiled-coil region spans residues 321–356 (TAAQQQQQQQEQQQQQQQQQQQQQHQQQLQQAAALH). Residues 322–355 (AAQQQQQQQEQQQQQQQQQQQQQHQQQLQQAAAL) are compositionally biased toward low complexity. Residues 356–369 (HPHHHHSHHGHHGH) are compositionally biased toward basic residues. Positions 498–579 (LQLWQFLVAL…NGERYVYRFV (82 aa)) form a DNA-binding region, ETS. Positions 609-624 (LAKTPPTSGDSQTQSP) are enriched in polar residues. Residues 609–628 (LAKTPPTSGDSQTQSPRVAK) are disordered.

This sequence belongs to the ETS family. As to expression, in the adult brain, expressed almost exclusively in dopaminergic neurons.

The protein localises to the nucleus. In terms of biological role, required in dopaminergic neurons to regulate expression of genes involved in dopamine signaling. Decreases expression of the dopamine transporter DAT and increases expression of the dopamine transporter Vmat and the tyrosine 3-monooxygenase ple which is involved in dopamine biosynthesis. Also involved in negatively regulating the expression of a group of endoplasmic reticulum proteins, the molecular chaperone Calr and the protein disulfide isomerases CaBP1 and ERp60. The chain is ETV5-related protein Ets96B from Drosophila melanogaster (Fruit fly).